A 352-amino-acid polypeptide reads, in one-letter code: Adenosine deaminase (352 aa).

N-acetylalanine is present on alanine 2. Zn(2+) contacts are provided by histidine 15 and histidine 17. The substrate site is built by histidine 17 and aspartate 19. An N6-acetyllysine modification is found at lysine 54. Residue glycine 184 participates in substrate binding. Residue histidine 214 coordinates Zn(2+). Glutamate 217 acts as the Proton donor in catalysis. Lysine 232 bears the N6-acetyllysine mark. Aspartate 295 contributes to the Zn(2+) binding site. Aspartate 296 is a substrate binding site.

This sequence belongs to the metallo-dependent hydrolases superfamily. Adenosine and AMP deaminases family. As to quaternary structure, interacts with DPP4 (via extracellular domain). Interacts with PLG (via Kringle 4 domain); the interaction stimulates PLG activation when in complex with DPP4. It depends on Zn(2+) as a cofactor. As to expression, detected in brain neurons in the median emninence (at protein level). Expressed in secondary deciduum (at protein level). Found in all tissues, occurs in large amounts in T-lymphocytes and, at the time of weaning, in gastrointestinal tissues.

It is found in the cell membrane. It localises to the cell junction. Its subcellular location is the cytoplasmic vesicle lumen. The protein localises to the cytoplasm. The protein resides in the lysosome. The enzyme catalyses adenosine + H2O + H(+) = inosine + NH4(+). It carries out the reaction 2'-deoxyadenosine + H2O + H(+) = 2'-deoxyinosine + NH4(+). The catalysed reaction is cordycepin + H2O + H(+) = 3'-deoxyinosine + NH4(+). Functionally, catalyzes the hydrolytic deamination of adenosine and 2-deoxyadenosine. Plays an important role in purine metabolism and in adenosine homeostasis. Modulates signaling by extracellular adenosine, and so contributes indirectly to cellular signaling events. Acts as a positive regulator of T-cell coactivation, by binding DPP4. Its interaction with DPP4 regulates lymphocyte-epithelial cell adhesion. Enhances dendritic cell immunogenicity by affecting dendritic cell costimulatory molecule expression and cytokines and chemokines secretion. Enhances CD4+ T-cell differentiation and proliferation. Acts as a positive modulator of adenosine receptors ADORA1 and ADORA2A, by enhancing their ligand affinity via conformational change. Stimulates plasminogen activation. Plays a role in male fertility. Plays a protective role in early postimplantation embryonic development. Also responsible for the deamination of cordycepin (3'-deoxyadenosine), a fungal natural product that shows antitumor, antibacterial, antifungal, antivirus, and immune regulation properties. The polypeptide is Adenosine deaminase (Ada) (Mus musculus (Mouse)).